We begin with the raw amino-acid sequence, 185 residues long: MLNDVISEYEAHLKKATEALRHHLASIRTGRASSALVEHLHVEAYGMTMPLNQLANISVPEPRLIVIQPYDANMIKAIEKAIQQSDLGLNPSNDGRVIRLPVPPLTEERRRELVKMVRHRVEEVKISVRNQRRDAIDDLKKLEAEKLISEDELHRGQERIQQLTDRCTRELDQIGAEKEAEVMAV.

Belongs to the RRF family.

Its subcellular location is the cytoplasm. Its function is as follows. Responsible for the release of ribosomes from messenger RNA at the termination of protein biosynthesis. May increase the efficiency of translation by recycling ribosomes from one round of translation to another. In Chloroflexus aurantiacus (strain ATCC 29364 / DSM 637 / Y-400-fl), this protein is Ribosome-recycling factor.